An 877-amino-acid chain; its full sequence is Oligopeptide transporter 2 (877 aa).

The Cytoplasmic portion of the chain corresponds to 1-167; it reads MSETVKDKVI…DPTIPVETFR (167 aa). A helical transmembrane segment spans residues 168-188; that stretch reads AYFLAIIWSVIGSGFNEFFSH. Arginine 189 is a topological domain (extracellular). The helical transmembrane segment at 190–210 threads the bilayer; the sequence is VVSISLNTPIIQMFLYICGKA. At 211 to 240 the chain is on the cytoplasmic side; it reads WAKTIPCWTITIRGRKYGINIDKPWTQKEQ. A helical membrane pass occupies residues 241-261; sequence MFSTLLYAICQGAFYTHYNIL. Residues 262 to 272 lie on the Extracellular side of the membrane; it reads TQKLFYHSAFS. The chain crosses the membrane as a helical span at residues 273–293; it reads FGYQFLLSLSVQFIGFGFAGI. Over 294-334 the chain is Cytoplasmic; the sequence is LRKFVVYPARALWPTVMPTIAINKALLGKEKHESGMSRYKF. The chain crosses the membrane as a helical span at residues 335–355; that stretch reads FFLTFFIMFIYNWFPTYIINI. At 356 to 374 the chain is on the extracellular side; that stretch reads LNTFNWMTWIKPSNINLAN. Asparagine 374 is a glycosylation site (N-linked (GlcNAc...) asparagine). A helical membrane pass occupies residues 375 to 395; it reads ITGGVTGLGINPISSFDWNVI. The Cytoplasmic portion of the chain corresponds to 396-404; sequence SFNSPLVYP. A helical membrane pass occupies residues 405–425; it reads FWSYLTQYLGCILAALIVIAV. Residues 426–480 lie on the Extracellular side of the membrane; it reads YYSNYMSCQYLPIFTNSLYTNTGHSFKVTEVLDSDNKLDVKKYQSYSPPYYSAGN. The chain crosses the membrane as a helical span at residues 481 to 501; sequence LVSYGAFICAYPLMITWSFIV. Residues 502-553 lie on the Cytoplasmic side of the membrane; it reads HSKLLFNAFKDWALNLWAMRKLKSWVTMFKSDYRALDDYDDPHSNAMKNYKE. The chain crosses the membrane as a helical span at residues 554–574; that stretch reads VPDWWYFAILIGSLVVGIAVV. Over 575-582 the chain is Extracellular; sequence EHYPTNTP. The chain crosses the membrane as a helical span at residues 583 to 603; it reads VWGLFVCLGFNFVFLIPTTIL. The Cytoplasmic segment spans residues 604-614; sequence QATTGYSFGLN. The chain crosses the membrane as a helical span at residues 615–635; it reads LLIEMVMGYALPGNPIAIMIL. Residues 636–671 are Extracellular-facing; the sequence is KAFGYNIDGQADNYVSNLKIAHYCKIPPMALFRGQC. Residues 672 to 692 form a helical membrane-spanning segment; the sequence is VIVFIQIFVNLGVLNWQISNI. The Cytoplasmic segment spans residues 693-730; that stretch reads KDFCTPHQNAKFTCPDAVTYYNASVVWGAIGPKRIFNY. A helical transmembrane segment spans residues 731-751; that stretch reads IYPIFKWCWLIGACIGIFFGV. The Extracellular portion of the chain corresponds to 752 to 766; sequence WKRWGKFYPRYFDPM. The helical transmembrane segment at 767–789 threads the bilayer; sequence LFVGGMLNMSPPYNLMYYTSGMI. Residues 790–811 are Cytoplasmic-facing; that stretch reads VSYISQYYMKRHHLNLWEKYNY. Residues 812–832 form a helical membrane-spanning segment; sequence VLSAGFSTGLVLSAIIIFFAV. The Extracellular segment spans residues 833 to 877; the sequence is QYKDTAFNWWGNTVPYAGADGVGYPLKNITDTANGYFGYAPGHYP. An N-linked (GlcNAc...) asparagine glycan is attached at asparagine 860.

The protein belongs to the oligopeptide OPT transporter family.

It localises to the membrane. Transports tetra- and pentapeptides. Does not transport glutathione. The protein is Oligopeptide transporter 2 (OPT2) of Saccharomyces cerevisiae (strain ATCC 204508 / S288c) (Baker's yeast).